Consider the following 308-residue polypeptide: Small ribosomal subunit protein uS2 (308 aa).

S2 is subject to N-acetylserine. 2 laminin-binding regions span residues 161 to 180 and 205 to 229; these read IPCNNKGPHSVGLMWWMLAR and RDPEEIEKEEQAAAEKAVGKEEFQG. [DE]-W-[ST] repeat units follow at residues 230–232, 245–247, 279–281, 288–290, and 306–308; these read EWT and DWS. A laminin-binding region spans residues 242–308; that stretch reads EVADWSEGVQ…DWGGATADWS (67 aa). The disordered stretch occupies residues 262–308; it reads AGIEAPGKPAPAEVYAEDWSAQPATEDWSAAPTAQAGDWGGATADWS.

This sequence belongs to the universal ribosomal protein uS2 family. Monomer (37LRP) and homodimer (67LR). Component of the small ribosomal subunit. Mature ribosomes consist of a small (40S) and a large (60S) subunit. The 40S subunit contains about 33 different proteins and 1 molecule of RNA (18S). The 60S subunit contains about 49 different proteins and 3 molecules of RNA (28S, 5.8S and 5S). Interacts with rps21. Interacts with several laminins including at least lamb1. Interacts with mdk. Post-translationally, acylated. Acylation may be a prerequisite for conversion of the monomeric 37 kDa laminin receptor precursor (37LRP) to the mature dimeric 67 kDa laminin receptor (67LR), and may provide a mechanism for membrane association. In terms of processing, cleaved by stromelysin-3 (ST3) at the cell surface. Cleavage by stromelysin-3 may be a mechanism to alter cell-extracellular matrix interactions.

It localises to the cell membrane. The protein localises to the cytoplasm. The protein resides in the nucleus. Required for the assembly and/or stability of the 40S ribosomal subunit. Required for the processing of the 20S rRNA-precursor to mature 18S rRNA in a late step of the maturation of 40S ribosomal subunits. Also functions as a cell surface receptor for laminin. Plays a role in cell adhesion to the basement membrane and in the consequent activation of signaling transduction pathways. May play a role in cell fate determination and tissue morphogenesis. The sequence is that of Small ribosomal subunit protein uS2 (rpsa) from Danio rerio (Zebrafish).